A 360-amino-acid chain; its full sequence is Arginase, non-hepatic 2 (360 aa).

Mn(2+)-binding residues include H122, D145, H147, and D149. Residues H147–N151, S158–N160, and D204 each bind substrate. Mn(2+) contacts are provided by D253 and D255. Substrate is bound by residues T267 and E298.

The protein belongs to the arginase family. In terms of assembly, homotrimer. Mn(2+) serves as cofactor. Expressed at differing tadpole stages in tail, intestine, hindlimb and trunk region. Strongest in tadpole tail.

It catalyses the reaction L-arginine + H2O = urea + L-ornithine. The protein operates within nitrogen metabolism; urea cycle; L-ornithine and urea from L-arginine: step 1/1. As well as its role in the urea cycle, may be involved in tissue remodeling. The protein is Arginase, non-hepatic 2 (arg2-b) of Xenopus laevis (African clawed frog).